We begin with the raw amino-acid sequence, 226 residues long: 2-C-methyl-D-erythritol 4-phosphate cytidylyltransferase (226 aa).

The protein belongs to the IspD/TarI cytidylyltransferase family. IspD subfamily.

The catalysed reaction is 2-C-methyl-D-erythritol 4-phosphate + CTP + H(+) = 4-CDP-2-C-methyl-D-erythritol + diphosphate. Its pathway is isoprenoid biosynthesis; isopentenyl diphosphate biosynthesis via DXP pathway; isopentenyl diphosphate from 1-deoxy-D-xylulose 5-phosphate: step 2/6. In terms of biological role, catalyzes the formation of 4-diphosphocytidyl-2-C-methyl-D-erythritol from CTP and 2-C-methyl-D-erythritol 4-phosphate (MEP). In Bacillus thuringiensis (strain Al Hakam), this protein is 2-C-methyl-D-erythritol 4-phosphate cytidylyltransferase.